The sequence spans 112 residues: Nitrogenase-stabilizing/protective protein NifW (112 aa).

This sequence belongs to the NifW family. Homotrimer; associates with NifD.

May protect the nitrogenase Fe-Mo protein from oxidative damage. The chain is Nitrogenase-stabilizing/protective protein NifW from Paraburkholderia xenovorans (strain LB400).